Here is a 306-residue protein sequence, read N- to C-terminus: Meiotically up-regulated gene 73 protein (306 aa).

Helical transmembrane passes span 28–48, 59–79, 103–123, 125–145, 154–174, 190–210, and 224–244; these read YWAV…VSIF, FFSI…CNYG, YIQW…TVGV, ILEI…LLAA, WAYY…SVVL, FLWS…CWIL, and IFYS…FSWM.

This sequence belongs to the archaeal/bacterial/fungal opsin family.

It localises to the membrane. Its function is as follows. Has a role in meiosis. In Schizosaccharomyces pombe (strain 972 / ATCC 24843) (Fission yeast), this protein is Meiotically up-regulated gene 73 protein (mug73).